The sequence spans 578 residues: Arginine--tRNA ligase (578 aa).

The short motif at 127 to 137 (PNLAKEMHVGH) is the 'HIGH' region element.

It belongs to the class-I aminoacyl-tRNA synthetase family. Monomer.

It localises to the cytoplasm. The catalysed reaction is tRNA(Arg) + L-arginine + ATP = L-arginyl-tRNA(Arg) + AMP + diphosphate. The protein is Arginine--tRNA ligase of Pseudomonas savastanoi pv. phaseolicola (strain 1448A / Race 6) (Pseudomonas syringae pv. phaseolicola (strain 1448A / Race 6)).